A 220-amino-acid chain; its full sequence is UPF0319 protein YccT (220 aa).

The signal sequence occupies residues 1–20 (MKTGIVTTLIALCLPVSVFA).

Belongs to the UPF0319 family.

This Shigella flexneri serotype 5b (strain 8401) protein is UPF0319 protein YccT.